A 234-amino-acid chain; its full sequence is Adenosine 5'-phosphosulfate reductase (234 aa).

[4Fe-4S] cluster contacts are provided by Cys-120, Cys-121, Cys-203, and Cys-206. Cys-229 (nucleophile; cysteine thiosulfonate intermediate) is an active-site residue.

This sequence belongs to the PAPS reductase family. CysH subfamily. It depends on [4Fe-4S] cluster as a cofactor.

The protein localises to the cytoplasm. The enzyme catalyses [thioredoxin]-disulfide + sulfite + AMP + 2 H(+) = adenosine 5'-phosphosulfate + [thioredoxin]-dithiol. It participates in sulfur metabolism; hydrogen sulfide biosynthesis; sulfite from sulfate. In terms of biological role, catalyzes the formation of sulfite from adenosine 5'-phosphosulfate (APS) using thioredoxin as an electron donor. The protein is Adenosine 5'-phosphosulfate reductase of Bacillus cytotoxicus (strain DSM 22905 / CIP 110041 / 391-98 / NVH 391-98).